Reading from the N-terminus, the 539-residue chain is Glycerol kinase (539 aa).

T49 is a binding site for ADP. The ATP site is built by T49, T50, and S51. T49 is a binding site for sn-glycerol 3-phosphate. ADP is bound at residue R53. Residues R119, E120, Y171, and D280 each coordinate sn-glycerol 3-phosphate. Glycerol contacts are provided by R119, E120, Y171, D280, and Q281. ADP contacts are provided by T302 and G345. Residues T302, G345, Q349, and G446 each contribute to the ATP site. 2 residues coordinate ADP: G446 and N450.

The protein belongs to the FGGY kinase family.

The enzyme catalyses glycerol + ATP = sn-glycerol 3-phosphate + ADP + H(+). It functions in the pathway polyol metabolism; glycerol degradation via glycerol kinase pathway; sn-glycerol 3-phosphate from glycerol: step 1/1. Inhibited by fructose 1,6-bisphosphate (FBP). Key enzyme in the regulation of glycerol uptake and metabolism. Catalyzes the phosphorylation of glycerol to yield sn-glycerol 3-phosphate. The polypeptide is Glycerol kinase (Rhodopirellula baltica (strain DSM 10527 / NCIMB 13988 / SH1)).